Reading from the N-terminus, the 511-residue chain is Serine/threonine-protein kinase Nek3 (511 aa).

The residue at position 1 (Met1) is an N-acetylmethionine. Positions 1-282 (MDNYTVLRVI…EQILDEIKIS (282 aa)) are interaction with VAV2. The Protein kinase domain maps to 4–255 (YTVLRVIGQG…ATTLLCRGSL (252 aa)). ATP contacts are provided by residues 10-18 (IGQGSFGRA) and Lys33. The Proton acceptor role is filled by Asp125. Residue Thr159 is modified to Phosphothreonine; by autocatalysis. 2 disordered regions span residues 299 to 370 (LGEA…GPSS) and 443 to 511 (GPLS…GERA). Over residues 309 to 321 (EEERGRKCSHTEL) the composition is skewed to basic and acidic residues. Acidic residues predominate over residues 472–485 (LDEEDTDFEEDNEN). Position 477 is a phosphothreonine (Thr477). Over residues 498 to 511 (YGDGPGGQLLGERA) the composition is skewed to gly residues.

It belongs to the protein kinase superfamily. NEK Ser/Thr protein kinase family. NIMA subfamily. As to quaternary structure, interacts with PXN, PRLR, VAV1 and VAV2 and this interaction is prolactin-dependent. Mg(2+) is required as a cofactor. In terms of processing, phosphorylation at Thr-477 regulates its catalytic activity. As to expression, brain.

It localises to the cytoplasm. Its subcellular location is the cell projection. The protein resides in the axon. It carries out the reaction L-seryl-[protein] + ATP = O-phospho-L-seryl-[protein] + ADP + H(+). The enzyme catalyses L-threonyl-[protein] + ATP = O-phospho-L-threonyl-[protein] + ADP + H(+). Functionally, protein kinase which influences neuronal morphogenesis and polarity through effects on microtubules. Regulates microtubule acetylation in neurons. Contributes to prolactin-mediated phosphorylation of PXN and VAV2. This Mus musculus (Mouse) protein is Serine/threonine-protein kinase Nek3 (Nek3).